Here is a 155-residue protein sequence, read N- to C-terminus: Aspartate carbamoyltransferase regulatory chain (155 aa).

4 residues coordinate Zn(2+): cysteine 112, cysteine 117, cysteine 140, and cysteine 143.

This sequence belongs to the PyrI family. Contains catalytic and regulatory chains. The cofactor is Zn(2+).

In terms of biological role, involved in allosteric regulation of aspartate carbamoyltransferase. This Phocaeicola vulgatus (strain ATCC 8482 / DSM 1447 / JCM 5826 / CCUG 4940 / NBRC 14291 / NCTC 11154) (Bacteroides vulgatus) protein is Aspartate carbamoyltransferase regulatory chain.